Reading from the N-terminus, the 49-residue chain is Putative metallothionein MT1DP (49 aa).

The segment at 1–29 (MDLSCSCATGGSCTCASSCKCKEYKCTSC) is beta. A divalent metal cation contacts are provided by Cys5, Cys7, Cys13, Cys15, Cys19, Cys21, Cys26, Cys29, Cys33, Cys34, Cys36, Cys37, Cys41, Cys44, and Cys48. An alpha region spans residues 30-49 (KKNCCSCCPMGCAKCAQGCT).

Belongs to the metallothionein superfamily. Type 1 family.

Functionally, metallothioneins have a high content of cysteine residues that bind various heavy metals. This Homo sapiens (Human) protein is Putative metallothionein MT1DP (MT1DP).